The chain runs to 211 residues: Endo-1,4-beta-xylanase 3 (211 aa).

The signal sequence occupies residues 1–27 (MKVTAAFAGLLVTAFAAPVPEPVLVSR). A GH11 domain is found at 28 to 210 (SAGINYVQNY…GAGSASVTIS (183 aa)). The active-site Nucleophile is the Glu106. A disulfide bridge links Cys119 with Cys138. Glu197 (proton donor) is an active-site residue.

It belongs to the glycosyl hydrolase 11 (cellulase G) family.

The protein localises to the secreted. It carries out the reaction Endohydrolysis of (1-&gt;4)-beta-D-xylosidic linkages in xylans.. Its pathway is glycan degradation; xylan degradation. The polypeptide is Endo-1,4-beta-xylanase 3 (xynC) (Aspergillus kawachii (strain NBRC 4308) (White koji mold)).